The primary structure comprises 225 residues: UPF0758 protein SO_4248 (225 aa).

Residues 102 to 224 enclose the MPN domain; that stretch reads VLTNPDLTRD…IVSFAERGWI (123 aa). H173, H175, and D186 together coordinate Zn(2+). The JAMM motif signature appears at 173–186; the sequence is HNHPSGIAEPSQAD.

This sequence belongs to the UPF0758 family.

This is UPF0758 protein SO_4248 from Shewanella oneidensis (strain ATCC 700550 / JCM 31522 / CIP 106686 / LMG 19005 / NCIMB 14063 / MR-1).